A 427-amino-acid polypeptide reads, in one-letter code: Serine--tRNA ligase (427 aa).

230 to 232 (TSE) lines the L-serine pocket. Residues 260-262 (RRE) and Val-276 each bind ATP. Glu-283 serves as a coordination point for L-serine. An ATP-binding site is contributed by 347-350 (ELTS). L-serine is bound at residue Thr-387.

It belongs to the class-II aminoacyl-tRNA synthetase family. Type-1 seryl-tRNA synthetase subfamily. In terms of assembly, homodimer. The tRNA molecule binds across the dimer.

The protein localises to the cytoplasm. It carries out the reaction tRNA(Ser) + L-serine + ATP = L-seryl-tRNA(Ser) + AMP + diphosphate + H(+). It catalyses the reaction tRNA(Sec) + L-serine + ATP = L-seryl-tRNA(Sec) + AMP + diphosphate + H(+). Its pathway is aminoacyl-tRNA biosynthesis; selenocysteinyl-tRNA(Sec) biosynthesis; L-seryl-tRNA(Sec) from L-serine and tRNA(Sec): step 1/1. In terms of biological role, catalyzes the attachment of serine to tRNA(Ser). Is also able to aminoacylate tRNA(Sec) with serine, to form the misacylated tRNA L-seryl-tRNA(Sec), which will be further converted into selenocysteinyl-tRNA(Sec). This Micrococcus luteus (strain ATCC 4698 / DSM 20030 / JCM 1464 / CCM 169 / CCUG 5858 / IAM 1056 / NBRC 3333 / NCIMB 9278 / NCTC 2665 / VKM Ac-2230) (Micrococcus lysodeikticus) protein is Serine--tRNA ligase.